We begin with the raw amino-acid sequence, 306 residues long: Uricase (306 aa).

Active-site charge relay system residues include Lys5 and Thr65. Urate contacts are provided by Thr65, Asp66, Phe175, Arg192, Ile240, Gln241, and Asn267. The segment at 281–306 (AKVLREPPRPTGYQQFSMDRSDLEEQ) is disordered.

This sequence belongs to the uricase family.

The enzyme catalyses urate + O2 + H2O = 5-hydroxyisourate + H2O2. Its pathway is purine metabolism; urate degradation; (S)-allantoin from urate: step 1/3. Its function is as follows. Catalyzes the oxidation of uric acid to 5-hydroxyisourate, which is further processed to form (S)-allantoin. The protein is Uricase of Halalkalicoccus jeotgali (strain DSM 18796 / CECT 7217 / JCM 14584 / KCTC 4019 / B3).